The following is a 102-amino-acid chain: NADH-quinone oxidoreductase subunit K 2 (102 aa).

A run of 3 helical transmembrane segments spans residues 4–24 (ITPVHYLALSAALLLIGTVGV), 30–50 (IVIILMSIELILNAVNINLIA), and 62–82 (IFAIFVITDAVAEAAVGLGIL).

Belongs to the complex I subunit 4L family. In terms of assembly, NDH-1 is composed of 14 different subunits. Subunits NuoA, H, J, K, L, M, N constitute the membrane sector of the complex.

Its subcellular location is the cell inner membrane. The catalysed reaction is a quinone + NADH + 5 H(+)(in) = a quinol + NAD(+) + 4 H(+)(out). In terms of biological role, NDH-1 shuttles electrons from NADH, via FMN and iron-sulfur (Fe-S) centers, to quinones in the respiratory chain. The immediate electron acceptor for the enzyme in this species is believed to be ubiquinone. Couples the redox reaction to proton translocation (for every two electrons transferred, four hydrogen ions are translocated across the cytoplasmic membrane), and thus conserves the redox energy in a proton gradient. This is NADH-quinone oxidoreductase subunit K 2 from Solibacter usitatus (strain Ellin6076).